Consider the following 398-residue polypeptide: MVQRNAPKKAVHFGAGNIGRGFVACFLHNSGYEVIFAEVNDTTVQKLNSQKSYKVIEVGADGTSESTITNYRAINSRLNEAELVQEIATADLVTCSVGPHILKFLAPVIAKGIDARSTDLTPVAVIACENAIGATDTLAEFIKAPENTNPDRLADYDKRARFANSAIDRIVPAQDPDAGLDVRLEKFYEWVVERTPFADHEPPAVEGIHWVDNLQPFIERKLYTVNTGHATAAYHGYIRRKSTVYDALQDREIQEEVKKALANTASLITQKHGIPQDEQQAYVDKIVRRISNPHLEDAVERVGRAPLRKLSRKERFIGPAAELAEHGKDCGALLDAAEMAFRFQNVEGDDESFKLAEIMEQNGPEDVVKQVCGLEPKEKLFPAVVDVVKRVQADTQSD.

Residue 10–21 coordinates NAD(+); it reads AVHFGAGNIGRG. Lys-221 is a catalytic residue.

It belongs to the mannitol dehydrogenase family. In terms of assembly, monomer.

It catalyses the reaction D-mannitol 1-phosphate + NAD(+) = beta-D-fructose 6-phosphate + NADH + H(+). Functionally, catalyzes the NAD(H)-dependent interconversion of D-fructose 6-phosphate and D-mannitol 1-phosphate in the mannitol metabolic pathway. In Chaetomium globosum (strain ATCC 6205 / CBS 148.51 / DSM 1962 / NBRC 6347 / NRRL 1970) (Soil fungus), this protein is Mannitol-1-phosphate 5-dehydrogenase.